A 387-amino-acid polypeptide reads, in one-letter code: Phosphoglycerate kinase (387 aa).

Substrate-binding positions include 21–23, R36, 60–63, R114, and R147; these read DLN and HLGR. ATP-binding positions include K198, E313, and 339–342; that span reads GGDT.

The protein belongs to the phosphoglycerate kinase family. Monomer.

Its subcellular location is the cytoplasm. The catalysed reaction is (2R)-3-phosphoglycerate + ATP = (2R)-3-phospho-glyceroyl phosphate + ADP. It participates in carbohydrate degradation; glycolysis; pyruvate from D-glyceraldehyde 3-phosphate: step 2/5. In Baumannia cicadellinicola subsp. Homalodisca coagulata, this protein is Phosphoglycerate kinase.